The sequence spans 133 residues: Capsid protein (133 aa).

This sequence belongs to the Leviviricetes capsid protein family. In terms of assembly, homodimer. The homodimers binds to the viral RNA via an operator hairpin, but also to many other RNA sequences in the viral genome; this interaction probably shifts the virus from the replicative to the assembly phase and ensures specific encapsidation of the viral genome. Interacts with the maturation protein A2.

It is found in the virion. In terms of biological role, capsid protein self-assembles to form an icosahedral capsid with a T=3 symmetry, about 26 nm in diameter, and consisting of 89 capsid proteins dimers (178 capsid proteins). Involved in viral genome encapsidation through the interaction between a capsid protein dimer and the multiple packaging signals present in the RNA genome. Binding of the capsid proteins to the viral RNA induces a conformational change required for efficient T=3 shell formation. The capsid also contains 1 copy of the A2 maturation protein. Its function is as follows. Acts as a translational repressor of viral replicase synthesis late in infection. This latter function is the result of capsid protein interaction with an RNA hairpin which contains the replicase ribosome-binding site. This Escherichia virus Qbeta (Bacteriophage Q-beta) protein is Capsid protein.